The sequence spans 291 residues: tRNA dimethylallyltransferase (291 aa).

Position 8-15 (8-15 (GSTASGKT)) interacts with ATP. Residue 10 to 15 (TASGKT) coordinates substrate. Residues 33–36 (DSLC) form an interaction with substrate tRNA region.

The protein belongs to the IPP transferase family. As to quaternary structure, monomer. Mg(2+) serves as cofactor.

It carries out the reaction adenosine(37) in tRNA + dimethylallyl diphosphate = N(6)-dimethylallyladenosine(37) in tRNA + diphosphate. Its function is as follows. Catalyzes the transfer of a dimethylallyl group onto the adenine at position 37 in tRNAs that read codons beginning with uridine, leading to the formation of N6-(dimethylallyl)adenosine (i(6)A). This chain is tRNA dimethylallyltransferase, found in Aliarcobacter butzleri (strain RM4018) (Arcobacter butzleri).